The primary structure comprises 325 residues: MSEDNLQMVVVQAQNCGVLHVYVQGNLEERGGKTIILTVHDIGTNHKSFVRFVNHPSMATVKEKAIFLHVCVPGQEDNSADFFGDFPTLDGIGDDLSAVLDKFEVKSAIAFGEGVGANIICRFAMGHPNRIMGIVLVHCTSTTAGIIEYCKEKVMNMRLENSIMSDGAWDYLLAHKFGGESKSRQEYLEELKATLNPKNLSKYLVAFTKRTDLSSTIGTKLETVDALLVTGSKASHLHTVYTTHKSMNKKKTTLLVVDNVADVMQEAPDKLARSLILLCKGCGVLSGVAIPGMERQRTLSSSMEEADRPRRMSVTQPHLPPVPSA.

The interval 296-325 (QRTLSSSMEEADRPRRMSVTQPHLPPVPSA) is disordered.

This sequence belongs to the NDRG family.

This is an uncharacterized protein from Caenorhabditis elegans.